Reading from the N-terminus, the 383-residue chain is MDRTCEERPAEDGSDEEDPDSMEAPTRIRDTPEDIVLEAPASGLAFHPARDLLAAGDVDGDVFVFSYSCQEGETKELWSSGHHLKACRAVAFSEDGQKLVTVSKDKAIHVLDVEQGRLERRISKAHGAPINSLLLVDENVLATGDDMGGIRLWDQRKEGPLMDMRQHEEYIADMALDPAKKLLLTASGDGCLGVFNIKRRRFELLSEPQSGDLTSVTLMKCGKKVACGSSEGTIYLFNWNGFGATSDRFALRAESIDCMVPVTESLLCTGSTDGVIRAVNILPNRVVGSVGQHTGEPVGELALSHCGRFLASSGHDQRLKFWDMAQLRAVVVDDYRQRKKKGGPLRALSSKTWSTDDFFAGLREEGEDSMAQEEKEETGDDSD.

Basic and acidic residues predominate over residues 1 to 11; it reads MDRTCEERPAE. A disordered region spans residues 1 to 33; that stretch reads MDRTCEERPAEDGSDEEDPDSMEAPTRIRDTPE. The span at 12–21 shows a compositional bias: acidic residues; it reads DGSDEEDPDS. Serine 14 carries the post-translational modification Phosphoserine. 7 WD repeats span residues 36 to 75, 82 to 121, 125 to 163, 166 to 205, 208 to 247, 250 to 289, and 293 to 332; these read VLEA…GETK, HHLK…LERR, AHGA…PLMD, QHEE…FELL, PQSG…ATSD, ALRA…VVGS, and HTGE…AVVV. Serine 354 carries the post-translational modification Phosphoserine. Residues 362–383 are disordered; the sequence is LREEGEDSMAQEEKEETGDDSD. A compositionally biased stretch (acidic residues) spans 365 to 383; sequence EGEDSMAQEEKEETGDDSD. The residue at position 378 (threonine 378) is a Phosphothreonine. A Phosphoserine modification is found at serine 382.

This sequence belongs to the WD repeat WDR55 family.

It localises to the nucleus. Its subcellular location is the nucleolus. It is found in the cytoplasm. Nucleolar protein that acts as a modulator of rRNA synthesis. Plays a central role during organogenesis. This Pongo abelii (Sumatran orangutan) protein is WD repeat-containing protein 55 (WDR55).